Here is a 262-residue protein sequence, read N- to C-terminus: Polyamine aminopropyltransferase (262 aa).

Residues 1–249 (MWITQEITPY…DIHRAAFALP (249 aa)) enclose the PABS domain. Asn-29 provides a ligand contact to S-methyl-5'-thioadenosine. A spermidine-binding site is contributed by Asp-83. Asp-155 serves as the catalytic Proton acceptor.

It belongs to the spermidine/spermine synthase family. Homodimer or homotetramer.

It is found in the cytoplasm. The enzyme catalyses S-adenosyl 3-(methylsulfanyl)propylamine + putrescine = S-methyl-5'-thioadenosine + spermidine + H(+). It participates in amine and polyamine biosynthesis; spermidine biosynthesis; spermidine from putrescine: step 1/1. Functionally, catalyzes the irreversible transfer of a propylamine group from the amino donor S-adenosylmethioninamine (decarboxy-AdoMet) to putrescine (1,4-diaminobutane) to yield spermidine. This chain is Polyamine aminopropyltransferase, found in Helicobacter pylori (strain HPAG1).